A 601-amino-acid chain; its full sequence is A-type ATP synthase subunit A (601 aa).

Gly-235–Thr-242 is a binding site for ATP.

It belongs to the ATPase alpha/beta chains family. In terms of assembly, has multiple subunits with at least A(3), B(3), C, D, E, F, H, I and proteolipid K(x).

The protein resides in the cell membrane. It catalyses the reaction ATP + H2O + 4 H(+)(in) = ADP + phosphate + 5 H(+)(out). In terms of biological role, component of the A-type ATP synthase that produces ATP from ADP in the presence of a proton gradient across the membrane. The A chain is the catalytic subunit. This is A-type ATP synthase subunit A from Thermofilum pendens (strain DSM 2475 / Hrk 5).